The chain runs to 282 residues: Bicarbonate transport ATP-binding protein CmpD (282 aa).

In terms of domain architecture, ABC transporter spans L24–E257. An ATP-binding site is contributed by G60–S67.

Belongs to the ABC transporter superfamily. Nitrate/nitrite/cyanate uptake transporter (NitT) (TC 3.A.1.16) family. The complex is composed of two ATP-binding proteins (CmpC and CmpD), a transmembrane protein (CmpB) and a solute-binding protein (CmpA).

It localises to the cell inner membrane. Its function is as follows. Part of the ABC transporter complex CmpABCD involved in bicarbonate transport. Responsible for energy coupling to the transport system. The chain is Bicarbonate transport ATP-binding protein CmpD (cmpD) from Synechocystis sp. (strain ATCC 27184 / PCC 6803 / Kazusa).